Consider the following 205-residue polypeptide: Small ribosomal subunit protein uS4 (205 aa).

The tract at residues 18-46 is disordered; sequence NIWGRSKSPVNRREYGPGQHGQRRKGKLS. An S4 RNA-binding domain is found at 94-157; sequence RRLDAVVYRA…RQMTLVLEAQ (64 aa).

This sequence belongs to the universal ribosomal protein uS4 family. In terms of assembly, part of the 30S ribosomal subunit. Contacts protein S5. The interaction surface between S4 and S5 is involved in control of translational fidelity.

Functionally, one of the primary rRNA binding proteins, it binds directly to 16S rRNA where it nucleates assembly of the body of the 30S subunit. With S5 and S12 plays an important role in translational accuracy. The protein is Small ribosomal subunit protein uS4 of Xanthobacter autotrophicus (strain ATCC BAA-1158 / Py2).